The primary structure comprises 107 residues: MAHYKEFEFDCDFGGQRAKFKFYIGTPQEGHHPLQFQAKWLSDERGGTIPDEVMKAISQLNDLAKKNSVPLPDLCVYALGSAQETQVSNHEEDADVLETQDDNAEQV.

A disordered region spans residues 86-107 (QVSNHEEDADVLETQDDNAEQV). Over residues 92 to 107 (EDADVLETQDDNAEQV) the composition is skewed to acidic residues.

This is an uncharacterized protein from Rickettsia prowazekii (strain Madrid E).